A 662-amino-acid polypeptide reads, in one-letter code: 3',5'-cyclic-AMP phosphodiesterase, isoform F (662 aa).

Disordered stretches follow at residues 79–108 (VPAS…LSQG) and 207–245 (SAGQ…RLPT). Over residues 80 to 98 (PASNKSRRPNQSSSASRSG) the composition is skewed to polar residues. Residues 248–577 (VETPRENELG…DYYQSMIPPS (330 aa)) enclose the PDEase domain. Residue His-324 is the Proton donor of the active site. 324–328 (HNSLH) provides a ligand contact to 3',5'-cyclic AMP. His-328, His-364, Asp-365, and Asp-482 together coordinate a divalent metal cation. Residues Asp-365, Asp-482, and Gln-533 each contribute to the 3',5'-cyclic AMP site. The segment covering 599 to 616 (EESDQENLAELEEGDESG) has biased composition (acidic residues). A disordered region spans residues 599–662 (EESDQENLAE…CQNQPQHGGM (64 aa)). The span at 617-634 (GESTTTGTTGTTAASALS) shows a compositional bias: low complexity. Over residues 635–646 (GAGGGGGGGGGM) the composition is skewed to gly residues. Residues 652–662 (GCQNQPQHGGM) are compositionally biased toward polar residues.

It belongs to the cyclic nucleotide phosphodiesterase family. PDE4 subfamily. In terms of assembly, monomer. A divalent metal cation serves as cofactor.

The enzyme catalyses 3',5'-cyclic AMP + H2O = AMP + H(+). It functions in the pathway purine metabolism; 3',5'-cyclic AMP degradation; AMP from 3',5'-cyclic AMP: step 1/1. Its function is as follows. Hydrolyzes the second messenger cAMP, which is a key regulator of many important physiological processes. Vital for female fertility. Required for learning/memory. In Drosophila melanogaster (Fruit fly), this protein is 3',5'-cyclic-AMP phosphodiesterase, isoform F.